Here is a 480-residue protein sequence, read N- to C-terminus: Glutamyl-tRNA(Gln) amidotransferase subunit A (480 aa).

Active-site charge relay system residues include Lys-70 and Ser-145. The active-site Acyl-ester intermediate is the Ser-169.

Belongs to the amidase family. GatA subfamily. Heterotrimer of A, B and C subunits.

The catalysed reaction is L-glutamyl-tRNA(Gln) + L-glutamine + ATP + H2O = L-glutaminyl-tRNA(Gln) + L-glutamate + ADP + phosphate + H(+). Allows the formation of correctly charged Gln-tRNA(Gln) through the transamidation of misacylated Glu-tRNA(Gln) in organisms which lack glutaminyl-tRNA synthetase. The reaction takes place in the presence of glutamine and ATP through an activated gamma-phospho-Glu-tRNA(Gln). The chain is Glutamyl-tRNA(Gln) amidotransferase subunit A from Lactobacillus delbrueckii subsp. bulgaricus (strain ATCC 11842 / DSM 20081 / BCRC 10696 / JCM 1002 / NBRC 13953 / NCIMB 11778 / NCTC 12712 / WDCM 00102 / Lb 14).